A 291-amino-acid polypeptide reads, in one-letter code: AA14 family lytic polysaccharide monooxygenase (291 aa).

The first 17 residues, 1 to 17 (MLTTAILFTSLAGSAYA), serve as a signal peptide directing secretion. An N-linked (GlcNAc...) asparagine glycan is attached at Asn-141. 3 cysteine pairs are disulfide-bonded: Cys-192/Cys-197, Cys-199/Cys-220, and Cys-240/Cys-247.

It belongs to the polysaccharide monooxygenase AA14 family. Requires Cu(2+) as cofactor.

It is found in the secreted. In terms of biological role, lytic polysaccharide monooxygenase (LPMO) that is active against heteroxylan, xyloglucan and cellulose in beta-cellulose and released native oligosaccharides and corresponding C1- and/or C4-oxidized products. May act mainly on heteroxylan with numerous arabinosyl substituents between cellulose fibers rather than on recalcitrant xylan tightly associated with cellulose. Catalysis by LPMOs requires the reduction of the active-site copper from Cu(II) to Cu(I) by a reducing agent and H(2)O(2) or O(2) as a cosubstrate. Shows a branched chain preference, and has synergistic effects with the Penicillium parvum debranching enzyme ABF62C in an enzyme- and ascorbic acid-dependent manner. Also has synergistic effects with the Penicillium parvum GH10 endoxylanase XYN1, and the degree of synergy was greater with step-by-step addition than with simultaneous addition. The chain is AA14 family lytic polysaccharide monooxygenase from Sordaria brevicollis.